Here is a 467-residue protein sequence, read N- to C-terminus: Replication factor C large subunit (467 aa).

ATP is bound at residue 47–54 (GPPGVGKT).

The protein belongs to the activator 1 small subunits family. RfcL subfamily. Heteromultimer composed of small subunits (RfcS) and large subunits (RfcL).

In terms of biological role, part of the RFC clamp loader complex which loads the PCNA sliding clamp onto DNA. In Methanothrix thermoacetophila (strain DSM 6194 / JCM 14653 / NBRC 101360 / PT) (Methanosaeta thermophila), this protein is Replication factor C large subunit.